The sequence spans 454 residues: Trigger factor (454 aa).

The region spanning 170 to 256 (DSIVKVDFVE…IKSIKKRDLP (87 aa)) is the PPIase FKBP-type domain.

This sequence belongs to the FKBP-type PPIase family. Tig subfamily.

Its subcellular location is the cytoplasm. The enzyme catalyses [protein]-peptidylproline (omega=180) = [protein]-peptidylproline (omega=0). Its function is as follows. Involved in protein export. Acts as a chaperone by maintaining the newly synthesized protein in an open conformation. Functions as a peptidyl-prolyl cis-trans isomerase. This chain is Trigger factor (tig), found in Borreliella burgdorferi (strain ATCC 35210 / DSM 4680 / CIP 102532 / B31) (Borrelia burgdorferi).